Here is a 268-residue protein sequence, read N- to C-terminus: Interleukin-1 alpha (268 aa).

Residues 1-112 (MAKVPDLFED…DTEEEIIKPR (112 aa)) constitute a propeptide that is removed on maturation. Lys-82 carries the post-translational modification N6-acetyllysine. Residues 82–86 (KKRRL) form a nuclear localization signal (NLS) region. A Phosphoserine modification is found at Ser-87. Residues Asn-102 and Asn-141 are each glycosylated (N-linked (GlcNAc...) asparagine).

This sequence belongs to the IL-1 family. As to quaternary structure, monomer. Interacts with TMED10; the interaction mediates the translocation from the cytoplasm into the ERGIC (endoplasmic reticulum-Golgi intermediate compartment) and thereby secretion. Interacts with IL1R1. Interacts with S100A13; this interaction is the first step in the export of IL1A, followed by direct translocation of this complex across the plasma membrane. In terms of processing, acetylated within its nuclear localization sequence, which impacts subcellular localization. Post-translationally, proteolytic processed by CAPN1 in a calcium-dependent manner. Cleavage from 31 kDa precursor to 18 kDa biologically active molecules. Phosphorylated. Phosphorylation greatly enhances susceptibility to digestion and promotes the conversion of pre-IL1A alpha to the biologically active IL1A.

The protein resides in the nucleus. Its subcellular location is the cytoplasm. It is found in the secreted. Its function is as follows. Cytokine constitutively present intracellularly in nearly all resting non-hematopoietic cells that plays an important role in inflammation and bridges the innate and adaptive immune systems. After binding to its receptor IL1R1 together with its accessory protein IL1RAP, forms the high affinity interleukin-1 receptor complex. Signaling involves the recruitment of adapter molecules such as MYD88, IRAK1 or IRAK4. In turn, mediates the activation of NF-kappa-B and the three MAPK pathways p38, p42/p44 and JNK pathways. Within the cell, acts as an alarmin and cell death results in its liberation in the extracellular space after disruption of the cell membrane to induce inflammation and alert the host to injury or damage. In addition to its role as a danger signal, which occurs when the cytokine is passively released by cell necrosis, directly senses DNA damage and acts as signal for genotoxic stress without loss of cell integrity. The sequence is that of Interleukin-1 alpha (IL1A) from Capra hircus (Goat).